Consider the following 275-residue polypeptide: UBX domain-containing protein 8 (275 aa).

Methionine 1 is a topological domain (cytoplasmic). Residues 2–22 (ASRGVVGIFLLSALPLLCLEL) form a helical membrane-spanning segment. The Lumenal portion of the chain corresponds to 23-33 (RRGKPDLGIKD). A helical membrane pass occupies residues 34–54 (LILLCGRIFLLLALLTLIISV). Topologically, residues 55 to 275 (TTSWVNSFKP…LNVEEKEQSS (221 aa)) are cytoplasmic. A disordered region spans residues 137–181 (DEDLELDSESQTSFETSNREAAKRRNLPNSVTNISPPAEQPTKKE). Positions 192-268 (TAEEVVTVAL…GITVDTVLNV (77 aa)) constitute a UBX domain.

Interacts with SYVN1 and VCP.

The protein resides in the endoplasmic reticulum membrane. Its function is as follows. Involved in endoplasmic reticulum-associated degradation (ERAD) for misfolded lumenal proteins, possibly by tethering VCP to the endoplasmic reticulum membrane. May play a role in reproduction. May play a role in reproduction. This is UBX domain-containing protein 8 (UBXN8) from Bos taurus (Bovine).